Reading from the N-terminus, the 597-residue chain is Elongation factor 4 (597 aa).

One can recognise a tr-type G domain in the interval 2–184 (DHIRNFSIIA…SLIAKVPPPK (183 aa)). Residues 14–19 (DHGKST) and 131–134 (NKID) each bind GTP.

This sequence belongs to the TRAFAC class translation factor GTPase superfamily. Classic translation factor GTPase family. LepA subfamily.

Its subcellular location is the cell inner membrane. The catalysed reaction is GTP + H2O = GDP + phosphate + H(+). Required for accurate and efficient protein synthesis under certain stress conditions. May act as a fidelity factor of the translation reaction, by catalyzing a one-codon backward translocation of tRNAs on improperly translocated ribosomes. Back-translocation proceeds from a post-translocation (POST) complex to a pre-translocation (PRE) complex, thus giving elongation factor G a second chance to translocate the tRNAs correctly. Binds to ribosomes in a GTP-dependent manner. This is Elongation factor 4 from Burkholderia ambifaria (strain MC40-6).